Here is a 137-residue protein sequence, read N- to C-terminus: Hemoglobin subunit beta (137 aa).

One can recognise a Globin domain in the interval 3 to 137 (HWTQEERDEI…VIDAISKQYH (135 aa)). Residues histidine 54 and histidine 83 each contribute to the heme b site.

Belongs to the globin family. As to quaternary structure, heterotetramer of two alpha chains and two beta chains. As to expression, red blood cells.

Its function is as follows. Involved in oxygen transport from gills to the various peripheral tissues. The chain is Hemoglobin subunit beta (HBB) from Mustelus griseus (Spotless smooth-hound).